A 411-amino-acid chain; its full sequence is Bifunctional protein GlmU (411 aa).

The segment at 1–204 (MDAIILCAGK…NGKLHGIELN (204 aa)) is pyrophosphorylase. Residues 6–9 (LCAG), Q74, and G79 contribute to the UTP site. The N-acetyl-alpha-D-glucosamine 1-phosphate site is built by T80, G130, N142, and N158. The segment at 205–224 (GYWNDIGHPWDVLSANNRFL) is linker. The tract at residues 225–411 (NKIISKVSGK…DELVITKKRN (187 aa)) is N-acetyltransferase. H308 (proton acceptor) is an active-site residue. A384 and K401 together coordinate acetyl-CoA.

This sequence in the N-terminal section; belongs to the N-acetylglucosamine-1-phosphate uridyltransferase family. The protein in the C-terminal section; belongs to the transferase hexapeptide repeat family.

The catalysed reaction is N-acetyl-alpha-D-glucosamine 1-phosphate + UTP + H(+) = UDP-N-acetyl-alpha-D-glucosamine + diphosphate. The enzyme catalyses alpha-D-glucosamine 1-phosphate + acetyl-CoA = N-acetyl-alpha-D-glucosamine 1-phosphate + CoA + H(+). It functions in the pathway nucleotide-sugar biosynthesis; UDP-N-acetyl-alpha-D-glucosamine biosynthesis; N-acetyl-alpha-D-glucosamine 1-phosphate from alpha-D-glucosamine 6-phosphate (route II): step 2/2. It participates in nucleotide-sugar biosynthesis; UDP-N-acetyl-alpha-D-glucosamine biosynthesis; UDP-N-acetyl-alpha-D-glucosamine from N-acetyl-alpha-D-glucosamine 1-phosphate: step 1/1. Catalyzes the last two sequential reactions in the de novo biosynthetic pathway for UDP-N-acetyl-glucosamine (UDP-GlcNAc). Responsible for the acetylation of GlcN-1-P to GlcNAc-1-P, and for the uridyl transfer from UTP to GlcNAc-1-P, to produce UDP-GlcNAc and pyrophosphate. The polypeptide is Bifunctional protein GlmU (Methanococcus maripaludis (strain C7 / ATCC BAA-1331)).